The chain runs to 288 residues: MKSFCVKAPAKINLFLHVVDKKETGYHLIEGLFVFANLSNFLEIKVGEKDSRYDNSTVEFINSESKINNQYNTVMKAVNLLLRHAPVRTKVTVKVVKNIPIAAGLGSGSSDAGAVVRTLGKLWEIDRTILNEIALNVGADVPASVDSKPVFVRGIGEELCHIKKFSLPTNVVLVKPKKRFLSTPEVFSKHEGKFSEPIKWSDDAEKDLLKLLKETRNDLQEIAISFVPEIKDVISTLESQEGSILSRMSGSGVSCFGIFDSEENAKAAAVNIGKKQPEWWVCDTQLIV.

The active site involves lysine 11. Proline 100–serine 110 contacts ATP. Aspartate 140 is a catalytic residue.

The protein belongs to the GHMP kinase family. IspE subfamily.

It catalyses the reaction 4-CDP-2-C-methyl-D-erythritol + ATP = 4-CDP-2-C-methyl-D-erythritol 2-phosphate + ADP + H(+). The protein operates within isoprenoid biosynthesis; isopentenyl diphosphate biosynthesis via DXP pathway; isopentenyl diphosphate from 1-deoxy-D-xylulose 5-phosphate: step 3/6. Its function is as follows. Catalyzes the phosphorylation of the position 2 hydroxy group of 4-diphosphocytidyl-2C-methyl-D-erythritol. This Wolbachia sp. subsp. Drosophila simulans (strain wRi) protein is 4-diphosphocytidyl-2-C-methyl-D-erythritol kinase.